A 144-amino-acid chain; its full sequence is Cytochrome c oxidase subunit 4 isoform 1, mitochondrial (144 aa).

The Mitochondrial matrix portion of the chain corresponds to 1–73 (SVVKSEDFSL…SFAEMNRGSN (73 aa)). An N6-acetyllysine; alternate modification is found at K4. N6-succinyllysine; alternate is present on K4. K28 is modified (N6-acetyllysine). A phosphoserine mark is found at S31 and S33. K35 is modified (N6-acetyllysine; alternate). K35 carries the post-translational modification N6-succinyllysine; alternate. K42 bears the N6-acetyllysine mark. Residues 74-99 (EWKTVVGGAMFFIGFTALVIMWQKHY) traverse the membrane as a helical segment. Residues 100–144 (VYGPLPQSFDKEWVAKQTKRMLDMKVNPIQGLASKWDYEKNEWKK) are Mitochondrial intermembrane-facing.

This sequence belongs to the cytochrome c oxidase IV family. Component of the cytochrome c oxidase (complex IV, CIV), a multisubunit enzyme composed of 14 subunits. The complex is composed of a catalytic core of 3 subunits MT-CO1, MT-CO2 and MT-CO3, encoded in the mitochondrial DNA, and 11 supernumerary subunits COX4I, COX5A, COX5B, COX6A, COX6B, COX6C, COX7A, COX7B, COX7C, COX8 and NDUFA4, which are encoded in the nuclear genome. The complex exists as a monomer or a dimer and forms supercomplexes (SCs) in the inner mitochondrial membrane with NADH-ubiquinone oxidoreductase (complex I, CI) and ubiquinol-cytochrome c oxidoreductase (cytochrome b-c1 complex, complex III, CIII), resulting in different assemblies (supercomplex SCI(1)III(2)IV(1) and megacomplex MCI(2)III(2)IV(2)). Interacts with PHB2; the interaction decreases in absence of SPHK2. Interacts with AFG1L. Interacts with ABCB7; this interaction allows the regulation of cellular iron homeostasis and cellular reactive oxygen species (ROS) levels in cardiomyocytes. Interacts with FLVCR2; this interaction occurs in the absence of heme and is disrupted upon heme binding. Interacts with IRGC.

The protein resides in the mitochondrion inner membrane. It participates in energy metabolism; oxidative phosphorylation. Its function is as follows. Component of the cytochrome c oxidase, the last enzyme in the mitochondrial electron transport chain which drives oxidative phosphorylation. The respiratory chain contains 3 multisubunit complexes succinate dehydrogenase (complex II, CII), ubiquinol-cytochrome c oxidoreductase (cytochrome b-c1 complex, complex III, CIII) and cytochrome c oxidase (complex IV, CIV), that cooperate to transfer electrons derived from NADH and succinate to molecular oxygen, creating an electrochemical gradient over the inner membrane that drives transmembrane transport and the ATP synthase. Cytochrome c oxidase is the component of the respiratory chain that catalyzes the reduction of oxygen to water. Electrons originating from reduced cytochrome c in the intermembrane space (IMS) are transferred via the dinuclear copper A center (CU(A)) of subunit 2 and heme A of subunit 1 to the active site in subunit 1, a binuclear center (BNC) formed by heme A3 and copper B (CU(B)). The BNC reduces molecular oxygen to 2 water molecules using 4 electrons from cytochrome c in the IMS and 4 protons from the mitochondrial matrix. This chain is Cytochrome c oxidase subunit 4 isoform 1, mitochondrial (COX4I1), found in Pan troglodytes (Chimpanzee).